A 770-amino-acid polypeptide reads, in one-letter code: Metallothionein expression activator (770 aa).

The tract at residues 77–97 (LVPSPKTGDGSSDKKNIDRTW) is disordered. 5 positions are modified to phosphoserine: Ser-80, Ser-122, Ser-247, Ser-249, and Ser-253. Thr-259 bears the Phosphothreonine mark. A disordered region spans residues 286-323 (PPPTLISPRMSNTSINGSPSRKYHRQRYPNKSPESNGL). Residues 294–304 (RMSNTSINGSP) show a composition bias toward polar residues. Residues Ser-385, Ser-392, and Ser-483 each carry the phosphoserine modification. Thr-486 and Thr-501 each carry phosphothreonine. Residue Ser-564 is modified to Phosphoserine. 2 C2H2-type zinc fingers span residues 603–627 (FECL…IQTH) and 633–657 (YSCD…KISH). The C2H2-type 3; atypical zinc-finger motif lies at 662–685 (YICPCGKRFNREDALMVHRSRMIC). Residues 699–770 (LTSPKKSLLD…RTLSNETDAL (72 aa)) form a disordered region. A compositionally biased stretch (basic and acidic residues) spans 705–745 (SLLDSPHDTSPVKETIARDKDGSVLMKMEEQLRDDMRKHGL). Ser-709 and Ser-714 each carry phosphoserine. A compositionally biased stretch (polar residues) spans 754 to 770 (AHEQNSNRTLSNETDAL).

Its subcellular location is the nucleus. In terms of biological role, plays a role in regulating basal-level expression of CUP1. Activates EGT2 transcription in the absence of SWI5. The sequence is that of Metallothionein expression activator (ACE2) from Saccharomyces cerevisiae (strain ATCC 204508 / S288c) (Baker's yeast).